The sequence spans 264 residues: Probable membrane transporter protein HI_0902 (264 aa).

A run of 9 helical transmembrane segments spans residues 4–24, 28–48, 49–69, 81–101, 107–127, 147–167, 183–203, 210–230, and 243–263; these read FILL…LFGI, LVIV…ESLL, MSTA…GSAQ, AVRI…LFIG, ISAK…VLSI, ILIG…IVPF, AFCG…SGWG, YSLG…SFFT, and VSTL…NMFL.

It belongs to the 4-toluene sulfonate uptake permease (TSUP) (TC 2.A.102) family.

Its subcellular location is the cell membrane. This is Probable membrane transporter protein HI_0902 from Haemophilus influenzae (strain ATCC 51907 / DSM 11121 / KW20 / Rd).